A 1180-amino-acid chain; its full sequence is Polyamine-transporting ATPase 13A2 (1180 aa).

Over 1–44 the chain is Cytoplasmic; it reads MSADSSPLVGSTPTGYGTLTIGTSIDPLSSSVSSVRLSGYCGSP. An intramembrane segment occupies 45 to 65; that stretch reads WRVIGYHVVVWMMAGIPLLLF. The Cytoplasmic segment spans residues 66 to 235; it reads RWKPLWGVRL…KSYPQLLVDE (170 aa). Position 151 is a phosphoserine (Ser151). A helical transmembrane segment spans residues 236-253; the sequence is ALNPYYGFQAFSIALWLA. The Lumenal segment spans residues 254–256; it reads DHY. A helical transmembrane segment spans residues 257–276; it reads YWYALCIFLISSISICLSLY. Topologically, residues 277–427 are cytoplasmic; that stretch reads KTRKQSQTLR…NFKFYKHSMK (151 aa). A helical transmembrane segment spans residues 428 to 448; the sequence is FVAALSVLALLGTIYSIFILY. Residues 449-463 are Lumenal-facing; sequence RNRVPLNEIVIRALD. Residues 464-484 traverse the membrane as a helical segment; the sequence is LVTVVVPPALPAAMTVCTLYA. At 485–930 the chain is on the cytoplasmic side; that stretch reads QSRLRRQGIF…REGRCSLDTS (446 aa). Catalysis depends on Asp513, which acts as the 4-aspartylphosphate intermediate. Mg(2+) contacts are provided by Asp878 and Asp882. A helical membrane pass occupies residues 931-951; the sequence is FSVFKYMALYSLTQFISVLIL. The Lumenal segment spans residues 952 to 957; it reads YTINTN. The chain crosses the membrane as a helical span at residues 958–978; it reads LGDLQFLAIDLVITTTVAVLM. Residues 979–994 are Cytoplasmic-facing; sequence SRTGPALVLGRVRPPG. A helical transmembrane segment spans residues 995–1015; the sequence is ALLSVPVLSSLLLQMVLVTGV. Residues 1016–1048 are Lumenal-facing; sequence QLGGYFLTLAQPWFVPLNRTVAAPDNLPNYENT. Residue Asn1033 is glycosylated (N-linked (GlcNAc...) asparagine). A helical membrane pass occupies residues 1049-1069; that stretch reads VVFSLSSFQYLILAAAVSKGA. The Cytoplasmic portion of the chain corresponds to 1070–1080; sequence PFRRPLYTNVP. A helical membrane pass occupies residues 1081–1101; the sequence is FLVALALLSSVLVGLVLVPGL. Residues 1102-1117 lie on the Lumenal side of the membrane; the sequence is LQGPLALRNITDTGFK. Asn1110 carries an N-linked (GlcNAc...) asparagine glycan. Residues 1118–1138 traverse the membrane as a helical segment; the sequence is LLLLGLVTLNFVGAFMLESVL. Topologically, residues 1139–1180 are cytoplasmic; sequence DQCLPACLRRLRPKRASKKRFKQLERELAEQPWPPLPAGPLR.

It belongs to the cation transport ATPase (P-type) (TC 3.A.3) family. Type V subfamily. As to quaternary structure, interacts with MYCBP2; the interaction inhibits the ubiquitination of TSC2 by MYCBP2. Interacts with HDAC6; the interaction results in recruitment of HDAC6 to lysosomes to promote CTTN deacetylation. Post-translationally, autophosphorylated. Accumulates in an inactive autophosphorylated state and autophosphorylation is stimulated by phosphatidic acid and phosphatidylinositol 3,5-bisphosphate but not by Mn(2+) or Zn(2+). The presence of spermine results in a dose-dependent reduction in autophosphorylation. As to expression, expressed in brain; protein levels are markedly increased in brain from subjects with Parkinson disease and subjects with dementia with Lewy bodies. Detected in pyramidal neurons located throughout the cingulate cortex (at protein level). In the substantia nigra, it is found in neuromelanin-positive dopaminergic neurons (at protein level).

It is found in the lysosome membrane. The protein resides in the late endosome membrane. It localises to the endosome. The protein localises to the multivesicular body membrane. Its subcellular location is the cytoplasmic vesicle. It is found in the autophagosome membrane. The catalysed reaction is spermidine(out) + ATP + H2O = spermidine(in) + ADP + phosphate + H(+). It catalyses the reaction spermine(out) + ATP + H2O = spermine(in) + ADP + phosphate + H(+). With respect to regulation, accumulates in an inactive autophosphorylated state. The presence of spermine results in a dose-dependent reduction in autophosphorylation. ATPase which acts as a lysosomal polyamine exporter with high affinity for spermine. Also stimulates cellular uptake of polyamines and protects against polyamine toxicity. Plays a role in intracellular cation homeostasis and the maintenance of neuronal integrity. Contributes to cellular zinc homeostasis. Confers cellular protection against Mn(2+) and Zn(2+) toxicity and mitochondrial stress. Required for proper lysosomal and mitochondrial maintenance. Regulates the autophagy-lysosome pathway through the control of SYT11 expression at both transcriptional and post-translational levels. Facilitates recruitment of deacetylase HDAC6 to lysosomes to deacetylate CTTN, leading to actin polymerization, promotion of autophagosome-lysosome fusion and completion of autophagy. Promotes secretion of exosomes as well as secretion of SCNA via exosomes. Plays a role in lipid homeostasis. The polypeptide is Polyamine-transporting ATPase 13A2 (Homo sapiens (Human)).